The primary structure comprises 486 residues: Cysteine--tRNA ligase (486 aa).

Residue Cys29 participates in Zn(2+) binding. Positions 31-41 (VTVYDYCHLGH) match the 'HIGH' region motif. Zn(2+)-binding residues include Cys217, His242, and Glu246. Positions 274-278 (KMSKS) match the 'KMSKS' region motif. Lys277 contacts ATP.

Belongs to the class-I aminoacyl-tRNA synthetase family. In terms of assembly, monomer. It depends on Zn(2+) as a cofactor.

Its subcellular location is the cytoplasm. It carries out the reaction tRNA(Cys) + L-cysteine + ATP = L-cysteinyl-tRNA(Cys) + AMP + diphosphate. The sequence is that of Cysteine--tRNA ligase from Thermosynechococcus vestitus (strain NIES-2133 / IAM M-273 / BP-1).